Consider the following 645-residue polypeptide: TBC1 domain family member 17 (645 aa).

Residues P57–E85 form a disordered region. A required for interaction with OPTN region spans residues D217–G309. A Rab-GAP TBC domain is found at G310–L520. The segment at Q596–A645 is disordered. The segment covering P600–P624 has biased composition (pro residues). Residues S602, S604, and S608 each carry the phosphoserine modification. At T615 the chain carries Phosphothreonine.

Interacts with OPTN; this interaction mediates TBC1D17 transient association with Rab8.

Its subcellular location is the cytoplasmic vesicle. It localises to the autophagosome. It is found in the cytoplasm. The protein localises to the recycling endosome. Probable GTPase-activating protein that inhibits RAB8A/B function. Reduces Rab8 recruitment to tubules emanating from the endocytic recycling compartment (ERC) and inhibits Rab8-mediated endocytic trafficking, such as that of transferrin receptor (TfR). Involved in regulation of autophagy. The protein is TBC1 domain family member 17 (Tbc1d17) of Mus musculus (Mouse).